We begin with the raw amino-acid sequence, 244 residues long: MSKCLQQLKRQLQHFGIDGCSLADGDIDYFFTVTGIDRGWGCGWRNIQMLISWLQYTNPNWFKRNFSSGNYEINSLQSLLLSAWMKGIDAEGYAQLGDNLHGKWIGATEVYSLFTGLFVNVALVDFDFRSEASASNALFLYVKKHFESSNDTSNVSPCYLQFQGHSIIIIGFCSSLETLVVLDPDRYQSVQKKFVNIADFNHCYMRKKRSLKFSQFQLVHFKQNIFLNDFSSKLEVRSTRISDF.

Cysteine 42 (nucleophile) is an active-site residue. The Proton acceptor role is filled by histidine 165. Residue aspartate 183 is part of the active site.

It belongs to the peptidase C78 family. ZUFSP subfamily.

Its subcellular location is the cytoplasm. The enzyme catalyses Thiol-dependent hydrolysis of ester, thioester, amide, peptide and isopeptide bonds formed by the C-terminal Gly of ubiquitin (a 76-residue protein attached to proteins as an intracellular targeting signal).. Its function is as follows. Deubiquitinase with endodeubiquitinase activity that preferentially cleaves 'Lys-48'-linked polyubiquitin chains. Shows only weak activity against 'Lys-63' and 'Lys-11'-linked chains. Has a role in meiosis. The sequence is that of Ubiquitin carboxyl-terminal hydrolase mug105 (mug105) from Schizosaccharomyces pombe (strain 972 / ATCC 24843) (Fission yeast).